The chain runs to 133 residues: Lymphocyte antigen 6 complex locus protein G6d (133 aa).

The N-terminal stretch at 1 to 19 (MKPQFVGILLSSLLGAALG) is a signal peptide. The 95-residue stretch at 22–116 (MRCYNCGGSP…ASHVAPAGIL (95 aa)) folds into the UPAR/Ly6 domain. Cysteine 27 and cysteine 35 are disulfide-bonded. Residues threonine 40 and threonine 41 are each glycosylated (O-linked (GalNAc...) threonine). 2 disulfide bridges follow: cysteine 42–cysteine 71 and cysteine 77–cysteine 96. Serine 104 is lipidated: GPI-anchor amidated serine. Residues 105–133 (AVASHVAPAGILAAAATALTCLLPGLWSG) constitute a propeptide, removed in mature form.

Homodimer. In terms of processing, O-glycosylated. As to expression, expressed in the adult lung, and in fetal liver, lung, kidney, brain and spleen.

The protein localises to the cell membrane. It is found in the cell projection. Its subcellular location is the filopodium. In Homo sapiens (Human), this protein is Lymphocyte antigen 6 complex locus protein G6d (LY6G6D).